A 511-amino-acid chain; its full sequence is 2,3-bisphosphoglycerate-independent phosphoglycerate mutase (511 aa).

The Mn(2+) site is built by Asp18 and Ser68. Ser68 (phosphoserine intermediate) is an active-site residue. Substrate-binding positions include His129, 159-160 (RD), Arg191, Lys197, 261-264 (RSDR), and Lys329. Residues Asp396, His400, Asp437, His438, and His459 each contribute to the Mn(2+) site. A disordered region spans residues 442 to 464 (ERMTKQAPDGSVRPYGGHTTNPV).

Belongs to the BPG-independent phosphoglycerate mutase family. As to quaternary structure, monomer. Mn(2+) is required as a cofactor.

The catalysed reaction is (2R)-2-phosphoglycerate = (2R)-3-phosphoglycerate. It participates in carbohydrate degradation; glycolysis; pyruvate from D-glyceraldehyde 3-phosphate: step 3/5. Catalyzes the interconversion of 2-phosphoglycerate and 3-phosphoglycerate. In Streptomyces coelicolor (strain ATCC BAA-471 / A3(2) / M145), this protein is 2,3-bisphosphoglycerate-independent phosphoglycerate mutase.